Reading from the N-terminus, the 165-residue chain is Peptide methionine sulfoxide reductase MsrA (165 aa).

Residue C10 is part of the active site.

It belongs to the MsrA Met sulfoxide reductase family.

The enzyme catalyses L-methionyl-[protein] + [thioredoxin]-disulfide + H2O = L-methionyl-(S)-S-oxide-[protein] + [thioredoxin]-dithiol. The catalysed reaction is [thioredoxin]-disulfide + L-methionine + H2O = L-methionine (S)-S-oxide + [thioredoxin]-dithiol. In terms of biological role, has an important function as a repair enzyme for proteins that have been inactivated by oxidation. Catalyzes the reversible oxidation-reduction of methionine sulfoxide in proteins to methionine. The protein is Peptide methionine sulfoxide reductase MsrA of Campylobacter jejuni subsp. jejuni serotype O:6 (strain 81116 / NCTC 11828).